Reading from the N-terminus, the 372-residue chain is MSLILTINPGSTSTKIAVFAAEEELFERTVEHPHDAFSGLAGVYGQLEARRHAVQTMLSRAGYADARFDIVVGRGGLLAPMHGGAWRVNQTMLDILESAAHGEHPCNLGAPLALAFARSHGAHRNVQAIIVDPVVTDELDPVARIGGLPELPRRSVFHALSQRAAARRAAAQLGIRYEDGRFLVGHFGGGISVGAHRHGRVVDVNNALEGEGPFSPERTGGLPVMPALELVRRGVYSFERMRSIVQREGGMWAHLGTNDLREVQRRMDAGDTAAAQIFDALAYNSAKALCALLPALTGAGQDVPSAPPVDAVVLTGGMARSGRFMQAVSDRLRYLGPVIVLPRLEEMQALAMGGLRVLRGEETPAEYGGGMS.

Belongs to the acetokinase family.

It localises to the cytoplasm. The enzyme catalyses butanoate + ATP = butanoyl phosphate + ADP. This is Probable butyrate kinase from Oleidesulfovibrio alaskensis (strain ATCC BAA-1058 / DSM 17464 / G20) (Desulfovibrio alaskensis).